Consider the following 221-residue polypeptide: Phosphate-specific transport system accessory protein PhoU homolog 1 (221 aa).

It belongs to the PhoU family. As to quaternary structure, homodimer.

The protein localises to the cytoplasm. Functionally, plays a role in the regulation of phosphate uptake. In this role, it may bind, possibly as a chaperone, to PhoR, PhoP or a PhoR-PhoP complex to promote dephosphorylation of phospho-PhoP, or inhibit formation of the PhoR-PhoP transitory complex. The polypeptide is Phosphate-specific transport system accessory protein PhoU homolog 1 (phoU1) (Mycobacterium bovis (strain ATCC BAA-935 / AF2122/97)).